Consider the following 402-residue polypeptide: Arginine biosynthesis bifunctional protein ArgJ (402 aa).

Thr152, Lys178, Thr189, Glu275, Asn397, and Thr402 together coordinate substrate. Thr189 (nucleophile) is an active-site residue.

This sequence belongs to the ArgJ family. As to quaternary structure, heterotetramer of two alpha and two beta chains.

The protein localises to the cytoplasm. It catalyses the reaction N(2)-acetyl-L-ornithine + L-glutamate = N-acetyl-L-glutamate + L-ornithine. The catalysed reaction is L-glutamate + acetyl-CoA = N-acetyl-L-glutamate + CoA + H(+). Its pathway is amino-acid biosynthesis; L-arginine biosynthesis; L-ornithine and N-acetyl-L-glutamate from L-glutamate and N(2)-acetyl-L-ornithine (cyclic): step 1/1. The protein operates within amino-acid biosynthesis; L-arginine biosynthesis; N(2)-acetyl-L-ornithine from L-glutamate: step 1/4. Catalyzes two activities which are involved in the cyclic version of arginine biosynthesis: the synthesis of N-acetylglutamate from glutamate and acetyl-CoA as the acetyl donor, and of ornithine by transacetylation between N(2)-acetylornithine and glutamate. This Symbiobacterium thermophilum (strain DSM 24528 / JCM 14929 / IAM 14863 / T) protein is Arginine biosynthesis bifunctional protein ArgJ.